We begin with the raw amino-acid sequence, 564 residues long: Efflux pump hmp6 (564 aa).

Positions 1–25 (MEKHAEPEKSLGDKEFQEKELHEKP) are enriched in basic and acidic residues. The interval 1–46 (MEKHAEPEKSLGDKEFQEKELHEKPAPAASEDISGDSSVNKEDGPD) is disordered. Helical transmembrane passes span 58–78 (LAVV…DTTI), 96–118 (VGWY…GKLY), 125–145 (IVFT…GVAP), 156–176 (IAGL…IHSV), 186–206 (GMIV…GGAF), 214–234 (WCFY…LFFF), 259–279 (FGTF…QMGG), and 289–309 (IIVL…VQFF). N312 and N322 each carry an N-linked (GlcNAc...) asparagine glycan. A run of 4 helical transmembrane segments spans residues 330-350 (IYMF…PIWF), 361-383 (SGIR…GALV), 395-415 (ASVV…VDAS), and 452-472 (IGTA…VSAA).

The protein belongs to the major facilitator superfamily. TCR/Tet family.

It localises to the cell membrane. Its function is as follows. Efflux pump that might be required for efficient secretion of hypothemycin or other secondary metabolies produced by the hypothemycin gene cluster. The polypeptide is Efflux pump hmp6 (Hypomyces subiculosus (Nectria subiculosa)).